Here is a 795-residue protein sequence, read N- to C-terminus: RAS guanyl-releasing protein 1 (795 aa).

Basic and acidic residues predominate over residues 1-12; that stretch reads MGTLGKAREAPR. The disordered stretch occupies residues 1–37; sequence MGTLGKAREAPRKPCHGSRAGPKARLEAKSTNSPLPA. In terms of domain architecture, N-terminal Ras-GEF spans 53–176; sequence LGHLAKGASL…HLIDTTQINS (124 aa). The ras exchanger motif region; required for transforming activity stretch occupies residues 57–110; the sequence is AKGASLDDLIDSCIQSFDADGNLCRNNQLLQVMLTMHRIIISSAELLQKVMNLY. Position 184 is a phosphothreonine; by PKC (Thr184). The Ras-GEF domain occupies 205-436; that stretch reads EPEELSEHLT…YELSYAREPR (232 aa). EF-hand domains are found at residues 470–505 and 506–532; these read HVQR…FPFS and FCVM…ASSI. Residues Asp483, Asp485, Asp487, Tyr489, and Glu494 each coordinate Ca(2+). The Phorbol-ester/DAG-type zinc-finger motif lies at 541–591; it reads PHNFQETTYLKPTFCDNCAGFLWGVIKQGYRCKDCGMNCHKQCKDLVVFEC. The residue at position 597 (Ser597) is a Phosphoserine. The suppress the PT region-mediated translocation to plasma membrane stretch occupies residues 686–694; that stretch reads TPGHFVLSS. The segment at 717 to 795 is PT region; mediates the BCR-dependent translocation to plasma membrane; it reads LVRKRAFVKW…LAQMDHGDSA (79 aa). Residues 738 to 779 are a coiled coil; the sequence is ELHLRLRTYQELEQEINTLKADNDALKIQLKYAQKKIESLQL.

This sequence belongs to the RASGRP family. In terms of assembly, homodimer. Forms a signaling complex with DGKZ and HRAS. Interacts with F-actin. Interacts with SKAP1. As to expression, detected in spleen and thymus. Expressed by mature thymocytes and to a lower extent by bone marrow-derived mast cells (at protein level). Detected in B-cells and keratinocytes (at protein level).

It localises to the cytoplasm. It is found in the cytosol. Its subcellular location is the cell membrane. The protein localises to the golgi apparatus membrane. The protein resides in the endoplasmic reticulum membrane. Autoinhibited. Activated by diacylglycerol and calcium binding, which induces a conformational change releasing the autoinhibitory state. Regulated by DGKA. Regulated by DGKZ. Regulated by PLC gamma and F-actin polymerization. Its function is as follows. Functions as a calcium- and diacylglycerol (DAG)-regulated nucleotide exchange factor specifically activating Ras through the exchange of bound GDP for GTP. Activates the Erk/MAP kinase cascade. Regulates T-cell/B-cell development, homeostasis and differentiation by coupling T-lymphocyte/B-lymphocyte antigen receptors to Ras. Regulates NK cell cytotoxicity and ITAM-dependent cytokine production by activation of Ras-mediated ERK and JNK pathways. Functions in mast cell degranulation and cytokine secretion, regulating FcERI-evoked allergic responses. May also function in differentiation of other cell types. Proto-oncogene, which promotes T-cell lymphomagenesis when its expression is deregulated. This Mus musculus (Mouse) protein is RAS guanyl-releasing protein 1 (Rasgrp1).